Consider the following 257-residue polypeptide: 14-3-3-like protein GF14-G (257 aa).

It belongs to the 14-3-3 family.

Functionally, is associated with a DNA binding complex that binds to the G box, a well-characterized cis-acting DNA regulatory element found in plant genes. This chain is 14-3-3-like protein GF14-G (GF14G), found in Oryza sativa subsp. japonica (Rice).